The sequence spans 319 residues: Tetrahydromethanopterin S-methyltransferase subunit H (319 aa).

The protein belongs to the MtrH family. As to quaternary structure, the complex is composed of 8 subunits; MtrA, MtrB, MtrC, MtrD, MtrE, MtrF, MtrG and MtrH.

It carries out the reaction 5-methyl-5,6,7,8-tetrahydromethanopterin + coenzyme M + 2 Na(+)(in) = 5,6,7,8-tetrahydromethanopterin + methyl-coenzyme M + 2 Na(+)(out). It functions in the pathway one-carbon metabolism; methanogenesis from CO(2); methyl-coenzyme M from 5,10-methylene-5,6,7,8-tetrahydromethanopterin: step 2/2. Its function is as follows. Part of a complex that catalyzes the formation of methyl-coenzyme M and tetrahydromethanopterin from coenzyme M and methyl-tetrahydromethanopterin. This is an energy-conserving, sodium-ion translocating step. MtrH catalyzes the transfer of the methyl group from methyl-tetrahydromethanopterin to the corrinoid prosthetic group of MtrA. This is Tetrahydromethanopterin S-methyltransferase subunit H from Methanococcus vannielii (strain ATCC 35089 / DSM 1224 / JCM 13029 / OCM 148 / SB).